The chain runs to 1836 residues: InaD-like protein (1836 aa).

An L27 domain is found at 1-65 (MPENPAAEKM…SIKQLKGQLS (65 aa)). PDZ domains are found at residues 134 to 221 (YIDI…AREV), 248 to 328 (DVEL…ARDP), and 365 to 453 (NVEL…VRRK). Phosphoserine occurs at positions 455, 459, and 482. The span at 456 to 466 (LSASPFEQPSS) shows a compositional bias: polar residues. Residues 456-492 (LSASPFEQPSSREAVAEPPEVPELTGSLKPETNSRME) form a disordered region. One can recognise a PDZ 4 domain in the interval 555–641 (DEELQKYSKL…PFTLVCCRRL (87 aa)). S647 carries the post-translational modification Phosphoserine. PDZ domains follow at residues 687–773 (TVEL…ICKP) and 1074–1166 (PRIV…VVQS). Over residues 1173-1191 (VIPSVNNKGKTPPQNQDQN) the composition is skewed to polar residues. The tract at residues 1173–1232 (VIPSVNNKGKTPPQNQDQNTQEKKAKRHGTAPPPMKLPPPYRAPSADTEESEEDSALTDK) is disordered. Residues 1203–1214 (APPPMKLPPPYR) show a composition bias toward pro residues. S1217 bears the Phosphoserine mark. Residues 1219–1228 (DTEESEEDSA) show a composition bias toward acidic residues. One can recognise a PDZ 7 domain in the interval 1245-1328 (LHIIELEKDK…PTRVKLVFIR (84 aa)). The tract at residues 1341 to 1448 (FPVPSHSPSP…ADVTGSGNFQ (108 aa)) is disordered. The span at 1372–1383 (PLPERESSKPED) shows a compositional bias: basic and acidic residues. Composition is skewed to polar residues over residues 1415–1426 (YSAQVSSSSQEI) and 1434–1448 (CQSTHADVTGSGNFQ). 2 consecutive PDZ domains span residues 1472-1555 (EMII…VIYR) and 1568-1650 (VFLV…EIGR). A Phosphothreonine modification is found at T1545. The disordered stretch occupies residues 1657-1678 (ASSRKTSQNSQGDQHSAHSSCR). In terms of domain architecture, PDZ 10 spans 1709-1795 (PRTVEIIREL…FGRIILQVVA (87 aa)). A disordered region spans residues 1813 to 1836 (SQLGSPTADRHPQDPEELLQRTAD).

Forms a ternary complex with PALS1 and CRB1. Component of a complex whose core is composed of ARHGAP17, AMOT, PALS1, INADL/PATJ and PARD3/PAR3. Forms a heterotrimeric complex composed of MMP5, LIN7B and PATJ; the N-terminal L27 domain of PALS1 interacts with the L27 domain of PATJ and the C-terminal L27 domain of PALS1 interacts with the L27 domain of LIN7B. Component of a complex composed of CRB3, PALS1 and PATJ. As part of the Crumbs complex; interacts with WWP1, the interaction is enhanced by AMOTL2 and facilitates WWP1 localization to the plasma membrane. The Crumbs complex promotes monoubiquitination of AMOTL2 by WWP1, which activates the Hippo signaling pathway. Interacts (via N-terminus) with PALS1/PALS (via PDZ domain). Interacts with TJP3/ZO-3 and CLDN1/claudin-1. Interacts with ASIC3, KCNJ10, KCNJ15, GRIN2A, GRIN2B, GRIN2C, GRIN2D, NLGN2, and HTR2A. Interacts with MPP7. Directly interacts with HTR4. Interacts (via PDZ domain 8) with WWC1 (via the ADDV motif). Interacts with SLC6A4. Interacts (via C-terminus) with ARHGEF18. Interacts with NPHP1. Interacts with PARD3/PAR3. Interacts (via PDZ1-6 domains) with TJP1/ZO1; the interaction is required for attachment and extension of TJP1/ZO1 condensates along the apical cell interface. As to expression, abundantly expressed in germ cells, also expressed in testes and seminiferous tubules, with faint expression in Sertoli cells (at protein level).

It localises to the cell junction. Its subcellular location is the tight junction. It is found in the apical cell membrane. The protein localises to the cytoplasm. The protein resides in the perinuclear region. Scaffolding protein that facilitates the localization of proteins to the cell membrane. Required for the correct formation of tight junctions and epithelial apico-basal polarity. Acts (via its L27 domain) as an apical connector and elongation factor for multistranded TJP1/ZO1 condensates that form a tight junction belt, thereby required for the formation of the tight junction-mediated cell barrier. Positively regulates epithelial cell microtubule elongation and cell migration, possibly via facilitating localization of PRKCI/aPKC and PAR3D/PAR3 at the leading edge of migrating cells. Plays a role in the correct reorientation of the microtubule-organizing center during epithelial migration. May regulate the surface expression and/or function of ASIC3 in sensory neurons. May recruit ARHGEF18 to apical cell-cell boundaries. The sequence is that of InaD-like protein from Rattus norvegicus (Rat).